Reading from the N-terminus, the 785-residue chain is Tripartite terminase subunit 1 (785 aa).

The C3H1-type zinc finger occupies 201 to 229 (CAVCFEELCVTANQGATIARRLADRICNH). The disordered stretch occupies residues 439–487 (GGATGGAEEEEPRAAAEEGGRRRGAGTPASEDGERGPEPGAQGPESWGD). Residues 450-459 (PRAAAEEGGR) show a composition bias toward basic and acidic residues. 696–703 (FASVYRCG) contacts ATP.

This sequence belongs to the herpesviridae TRM1 protein family. As to quaternary structure, associates with TRM2 and TRM3 to form the tripartite terminase complex. Interacts with portal protein.

It localises to the host nucleus. Its function is as follows. Component of the molecular motor that translocates viral genomic DNA in empty capsid during DNA packaging. Forms a tripartite terminase complex together with TRM2 and TRM3 in the host cytoplasm. Once the complex reaches the host nucleus, it interacts with the capsid portal vertex. This portal forms a ring in which genomic DNA is translocated into the capsid. TRM1 carries an endonuclease activity that plays an important role for the cleavage of concatemeric viral DNA into unit length genomes. The protein is Tripartite terminase subunit 1 of Human herpesvirus 2 (strain HG52) (HHV-2).